The primary structure comprises 118 residues: Small ribosomal subunit protein uS13 (118 aa).

The tract at residues 91-118 (HRHSLPVRGQRTKTNARTRKGPRKPIRK) is disordered.

It belongs to the universal ribosomal protein uS13 family. As to quaternary structure, part of the 30S ribosomal subunit. Forms a loose heterodimer with protein S19. Forms two bridges to the 50S subunit in the 70S ribosome.

In terms of biological role, located at the top of the head of the 30S subunit, it contacts several helices of the 16S rRNA. In the 70S ribosome it contacts the 23S rRNA (bridge B1a) and protein L5 of the 50S subunit (bridge B1b), connecting the 2 subunits; these bridges are implicated in subunit movement. Contacts the tRNAs in the A and P-sites. The sequence is that of Small ribosomal subunit protein uS13 from Hahella chejuensis (strain KCTC 2396).